A 374-amino-acid chain; its full sequence is UDP-N-acetylglucosamine--N-acetylmuramyl-(pentapeptide) pyrophosphoryl-undecaprenol N-acetylglucosamine transferase (374 aa).

UDP-N-acetyl-alpha-D-glucosamine-binding positions include 13–15 (TGG), N124, R165, S193, and Q294.

It belongs to the glycosyltransferase 28 family. MurG subfamily.

Its subcellular location is the cell inner membrane. It carries out the reaction di-trans,octa-cis-undecaprenyl diphospho-N-acetyl-alpha-D-muramoyl-L-alanyl-D-glutamyl-meso-2,6-diaminopimeloyl-D-alanyl-D-alanine + UDP-N-acetyl-alpha-D-glucosamine = di-trans,octa-cis-undecaprenyl diphospho-[N-acetyl-alpha-D-glucosaminyl-(1-&gt;4)]-N-acetyl-alpha-D-muramoyl-L-alanyl-D-glutamyl-meso-2,6-diaminopimeloyl-D-alanyl-D-alanine + UDP + H(+). It participates in cell wall biogenesis; peptidoglycan biosynthesis. Its function is as follows. Cell wall formation. Catalyzes the transfer of a GlcNAc subunit on undecaprenyl-pyrophosphoryl-MurNAc-pentapeptide (lipid intermediate I) to form undecaprenyl-pyrophosphoryl-MurNAc-(pentapeptide)GlcNAc (lipid intermediate II). In Rhizobium leguminosarum bv. trifolii (strain WSM2304), this protein is UDP-N-acetylglucosamine--N-acetylmuramyl-(pentapeptide) pyrophosphoryl-undecaprenol N-acetylglucosamine transferase.